The primary structure comprises 252 residues: Phosphoglycolate phosphatase (252 aa).

The Nucleophile role is filled by Asp13. Mg(2+) is bound by residues Asp13, Asp15, and Asp192.

Belongs to the HAD-like hydrolase superfamily. CbbY/CbbZ/Gph/YieH family. Monomer. Mg(2+) is required as a cofactor. The cofactor is chloride.

The enzyme catalyses 2-phosphoglycolate + H2O = glycolate + phosphate. It participates in organic acid metabolism; glycolate biosynthesis; glycolate from 2-phosphoglycolate: step 1/1. In terms of biological role, specifically catalyzes the dephosphorylation of 2-phosphoglycolate. Is involved in the dissimilation of the intracellular 2-phosphoglycolate formed during the DNA repair of 3'-phosphoglycolate ends, a major class of DNA lesions induced by oxidative stress. In Salmonella paratyphi A (strain ATCC 9150 / SARB42), this protein is Phosphoglycolate phosphatase.